Reading from the N-terminus, the 380-residue chain is Probable inactive reductase easA (380 aa).

FMN contacts are provided by residues Pro25–Thr27, Ala60, Gln102, and His171. 2 residues coordinate substrate: His171 and Asn174. Residues Lys223, Gly299, Gly324–Arg325, and Arg325 contribute to the FMN site. Tyr352 serves as a coordination point for substrate.

It belongs to the NADH:flavin oxidoreductase/NADH oxidase family.

Probable inactive dehydrogenase; part of the gene cluster that mediates the biosynthesis of fungal ergot alkaloid ergovaline, the predominant ergopeptine product in E.festucae var. lolii. DmaW catalyzes the first step of ergot alkaloid biosynthesis by condensing dimethylallyl diphosphate (DMAP) and tryptophan to form 4-dimethylallyl-L-tryptophan. The second step is catalyzed by the methyltransferase easF that methylates 4-dimethylallyl-L-tryptophan in the presence of S-adenosyl-L-methionine, resulting in the formation of 4-dimethylallyl-L-abrine. The catalase easC and the FAD-dependent oxidoreductase easE then transform 4-dimethylallyl-L-abrine to chanoclavine-I which is further oxidized by easD in the presence of NAD(+), resulting in the formation of chanoclavine-I aldehyde. Agroclavine dehydrogenase easG then mediates the conversion of chanoclavine-I aldehyde to agroclavine via a non-enzymatic adduct reaction: the substrate is an iminium intermediate that is formed spontaneously from chanoclavine-I aldehyde in the presence of glutathione. The presence of easA is not required to complete this reaction. Further conversion of agroclavine to paspalic acid is a two-step process involving oxidation of agroclavine to elymoclavine and of elymoclavine to paspalic acid, the second step being performed by the elymoclavine oxidase cloA. Paspalic acid is then further converted to D-lysergic acid. Ergovaline is assembled from D-lysergic acid and three different amino acids by the D-lysergyl-peptide-synthetase composed of a monomudular (lpsB) and a trimodular (lpsA) nonribosomal peptide synthetase subunit. In Epichloe festucae var. lolii (Neotyphodium lolii), this protein is Probable inactive reductase easA.